Here is a 1054-residue protein sequence, read N- to C-terminus: Filament-like plant protein 6 (1054 aa).

Coiled-coil stretches lie at residues 64–139 (VQIK…VKQH), 174–200 (AEDR…KDHE), and 250–341 (SNML…RKKL). Disordered regions lie at residues 359–390 (RDSG…GSEF) and 448–506 (EAQL…KEKD). Composition is skewed to low complexity over residues 371–380 (VKVSSPCKSP), 450–461 (QLQQNNSQKSSL), and 470–494 (SNPS…GSLS). Positions 389–463 (EFSLDNAQKF…NNSQKSSLEV (75 aa)) form a coiled coil. 2 coiled-coil regions span residues 637 to 666 (QNLV…RIHD) and 788 to 944 (ESDS…IFVL). Positions 951 to 1054 (FRPQPEQMRS…SRFFSSKSGY (104 aa)) are disordered. The span at 1007–1032 (PSDSETSDTTTSPSRVGSRLSRSGSS) shows a compositional bias: low complexity.

This sequence belongs to the FPP family. As to quaternary structure, interacts with WPP/MAF proteins.

The sequence is that of Filament-like plant protein 6 (FPP6) from Arabidopsis thaliana (Mouse-ear cress).